The primary structure comprises 220 residues: Phosphatidylserine decarboxylase proenzyme (220 aa).

Serine 188 serves as the catalytic Schiff-base intermediate with substrate; via pyruvic acid. Serine 188 bears the Pyruvic acid (Ser); by autocatalysis mark.

The protein belongs to the phosphatidylserine decarboxylase family. PSD-A subfamily. In terms of assembly, heterodimer of a large membrane-associated beta subunit and a small pyruvoyl-containing alpha subunit. The cofactor is pyruvate. Post-translationally, is synthesized initially as an inactive proenzyme. Formation of the active enzyme involves a self-maturation process in which the active site pyruvoyl group is generated from an internal serine residue via an autocatalytic post-translational modification. Two non-identical subunits are generated from the proenzyme in this reaction, and the pyruvate is formed at the N-terminus of the alpha chain, which is derived from the carboxyl end of the proenzyme. The post-translation cleavage follows an unusual pathway, termed non-hydrolytic serinolysis, in which the side chain hydroxyl group of the serine supplies its oxygen atom to form the C-terminus of the beta chain, while the remainder of the serine residue undergoes an oxidative deamination to produce ammonia and the pyruvoyl prosthetic group on the alpha chain.

The protein resides in the cell membrane. It carries out the reaction a 1,2-diacyl-sn-glycero-3-phospho-L-serine + H(+) = a 1,2-diacyl-sn-glycero-3-phosphoethanolamine + CO2. It functions in the pathway phospholipid metabolism; phosphatidylethanolamine biosynthesis; phosphatidylethanolamine from CDP-diacylglycerol: step 2/2. In terms of biological role, catalyzes the formation of phosphatidylethanolamine (PtdEtn) from phosphatidylserine (PtdSer). This is Phosphatidylserine decarboxylase proenzyme from Cytophaga hutchinsonii (strain ATCC 33406 / DSM 1761 / CIP 103989 / NBRC 15051 / NCIMB 9469 / D465).